We begin with the raw amino-acid sequence, 713 residues long: Polyribonucleotide nucleotidyltransferase (713 aa).

The Mg(2+) site is built by aspartate 485 and aspartate 491. The region spanning 552–611 (PRIHTIKINPEKIKDVIGKGGSVIRALTEETGTNIELDDDGTVRISAVANEAAMEAIRRI) is the KH domain. Residues 621-689 (NRIYEGKVVR…RQGRVRLSIK (69 aa)) enclose the S1 motif domain.

Belongs to the polyribonucleotide nucleotidyltransferase family. As to quaternary structure, component of the RNA degradosome, which is a multiprotein complex involved in RNA processing and mRNA degradation. Requires Mg(2+) as cofactor.

The protein localises to the cytoplasm. The catalysed reaction is RNA(n+1) + phosphate = RNA(n) + a ribonucleoside 5'-diphosphate. Its function is as follows. Involved in mRNA degradation. Catalyzes the phosphorolysis of single-stranded polyribonucleotides processively in the 3'- to 5'-direction. The polypeptide is Polyribonucleotide nucleotidyltransferase (Aeromonas salmonicida (strain A449)).